A 51-amino-acid chain; its full sequence is Insulin (51 aa).

3 disulfides stabilise this stretch: Cys8–Cys37, Cys20–Cys50, and Cys36–Cys41.

Belongs to the insulin family. As to quaternary structure, heterodimer of a B chain and an A chain linked by two disulfide bonds.

It is found in the secreted. In terms of biological role, insulin decreases blood glucose concentration. It increases cell permeability to monosaccharides, amino acids and fatty acids. It accelerates glycolysis, the pentose phosphate cycle, and glycogen synthesis in liver. This chain is Insulin, found in Seriola quinqueradiata (Five-ray yellowtail).